The following is a 235-amino-acid chain: Purine nucleoside phosphorylase DeoD-type (235 aa).

His4 contacts a purine D-ribonucleoside. Phosphate is bound by residues Gly20, Arg24, Arg43, and 87-90 (RVGT). A purine D-ribonucleoside contacts are provided by residues 179-181 (EME) and 203-204 (SN).

It belongs to the PNP/UDP phosphorylase family. Homohexamer; trimer of homodimers.

It catalyses the reaction a purine D-ribonucleoside + phosphate = a purine nucleobase + alpha-D-ribose 1-phosphate. It carries out the reaction a purine 2'-deoxy-D-ribonucleoside + phosphate = a purine nucleobase + 2-deoxy-alpha-D-ribose 1-phosphate. Its function is as follows. Catalyzes the reversible phosphorolytic breakdown of the N-glycosidic bond in the beta-(deoxy)ribonucleoside molecules, with the formation of the corresponding free purine bases and pentose-1-phosphate. This is Purine nucleoside phosphorylase DeoD-type from Levilactobacillus brevis (strain ATCC 367 / BCRC 12310 / CIP 105137 / JCM 1170 / LMG 11437 / NCIMB 947 / NCTC 947) (Lactobacillus brevis).